The following is a 578-amino-acid chain: Paraneoplastic antigen Ma6F (578 aa).

Disordered regions lie at residues 106 to 221 (AQPQ…AGAA) and 441 to 578 (AAPV…PPGK). A compositionally biased stretch (low complexity) spans 112 to 129 (AVARGAGEAGAAGEAGSV). Over residues 147-159 (GGIGEAGGVGEAG) the composition is skewed to gly residues. Residues 160-173 (AAGEAGAAGEAGAA) are compositionally biased toward low complexity. Residues 174–211 (GEAGGAGEAGGAGEAGGAGEEGGTGEEGGAGEAGGAGE) show a composition bias toward gly residues. The segment covering 449-461 (PAAAQASPAQGDA) has biased composition (low complexity). 2 stretches are compositionally biased toward acidic residues: residues 462 to 473 (SEADPGAEDADE) and 556 to 566 (EESENEDEDGA).

The polypeptide is Paraneoplastic antigen Ma6F (Homo sapiens (Human)).